The following is a 542-amino-acid chain: Esterase S (542 aa).

Residues 1–22 form the signal peptide; it reads MTQILLPIALLCLFAASTLSNP. A disulfide bridge links Cys-81 with Cys-100. An N-linked (GlcNAc...) asparagine glycan is attached at Asn-110. Ser-204 serves as the catalytic Acyl-ester intermediate. An intrachain disulfide couples Cys-256 to Cys-268. A glycan (N-linked (GlcNAc...) asparagine) is linked at Asn-396. Residues Cys-507 and Cys-528 are joined by a disulfide bond.

Belongs to the type-B carboxylesterase/lipase family. In terms of assembly, monomer. In terms of tissue distribution, specifically expressed in the ejaculatory bulbs of male.

The protein localises to the secreted. The enzyme catalyses a carboxylic ester + H2O = an alcohol + a carboxylate + H(+). Its function is as follows. Transferred from the ejaculatory bulbs of males to the female genitals upon copulation, plays an important role in the reproductive biology. In Drosophila virilis (Fruit fly), this protein is Esterase S (EstS).